Consider the following 227-residue polypeptide: Thymidylate synthase (227 aa).

Residue Arg89–Arg90 coordinates dUMP. Cys109 functions as the Nucleophile in the catalytic mechanism. DUMP-binding positions include Arg129–Asp132, Asn140, and His170–Tyr172. Position 132 (Asp132) interacts with (6R)-5,10-methylene-5,6,7,8-tetrahydrofolate.

It belongs to the thymidylate synthase family. Bacterial-type ThyA subfamily. In terms of assembly, homodimer.

Its subcellular location is the cytoplasm. The catalysed reaction is dUMP + (6R)-5,10-methylene-5,6,7,8-tetrahydrofolate = 7,8-dihydrofolate + dTMP. The protein operates within pyrimidine metabolism; dTTP biosynthesis. In terms of biological role, catalyzes the reductive methylation of 2'-deoxyuridine-5'-monophosphate (dUMP) to 2'-deoxythymidine-5'-monophosphate (dTMP) while utilizing 5,10-methylenetetrahydrofolate (mTHF) as the methyl donor and reductant in the reaction, yielding dihydrofolate (DHF) as a by-product. This enzymatic reaction provides an intracellular de novo source of dTMP, an essential precursor for DNA biosynthesis. The chain is Thymidylate synthase from Bacillus atrophaeus.